We begin with the raw amino-acid sequence, 426 residues long: Putative F-box protein At4g38870 (426 aa).

The F-box domain maps to 47–92 (SVNSELLPVDLIMEILKKLSLKPLIRFLCVSKLWASIIRDPYFMKL).

The sequence is that of Putative F-box protein At4g38870 from Arabidopsis thaliana (Mouse-ear cress).